The primary structure comprises 121 residues: Ribonuclease P protein component (121 aa).

This sequence belongs to the RnpA family. In terms of assembly, consists of a catalytic RNA component (M1 or rnpB) and a protein subunit.

It catalyses the reaction Endonucleolytic cleavage of RNA, removing 5'-extranucleotides from tRNA precursor.. RNaseP catalyzes the removal of the 5'-leader sequence from pre-tRNA to produce the mature 5'-terminus. It can also cleave other RNA substrates such as 4.5S RNA. The protein component plays an auxiliary but essential role in vivo by binding to the 5'-leader sequence and broadening the substrate specificity of the ribozyme. This Neisseria meningitidis serogroup A / serotype 4A (strain DSM 15465 / Z2491) protein is Ribonuclease P protein component.